Reading from the N-terminus, the 820-residue chain is MLFRWCPLVALAIASGTAATEQSWESSPYYPSPWTKGEGEWEAAYQKAVSFVSQLTLDEKVNLTTGVGWMQESCVGQVGSIPRLGFRSLCMQDGPLGIRFGTEARMDIFLYLTCNTNFYLPYVGDYVTAFPAGINVAATWSRELAYLRGKAMGEEFRGKGADVILGPAIGPIGRAPEGGRNWEGLGPDPVLAGKLVAETIKGMQKSGVIACAKHFIANEQERFRIAAEAQGYGFDIAESISSNVDDVTMHEIYLWPFADAVKAGVGSIMCSYNQINNSYGCGNSYTQNKLLKGELGFRGFIMSDWQAHHSGVGSAFAGLDMSMPGDTLFGTGVSYWGANLTIAVANGTIPEWRVDDMAVRIMAAYYKVGRDQVQVPINFNSWTTDVEGYQHALVKEGYGVVNQRVNVRDHHAQIARRVARDSTVLLKNKGVLPLTGTEQFTAIIGEDAGPNINGPNSCPDRGCDNGTLAMGWGSGTTNFPYLVTPDDAIQREIVGKGVGNVMSVLQNGDFKNIQAVAGQADVALVFINSDSGEGYISVDGNEGDRKNLTTWKGGDEMVKQVTSVCNNTVLVIHSSGPILAGQWHDNPNITAILWAGLPGQESGNALVDILYGKENPGGKSPFTWGRAAEDYGTTILREPNNGKGAPQHLFSEGIMFEYRHFDQKNITPVYEFGYGLSYTTFSYSDLRVRPMRANKYVPATGMTKPAPRLGHSSTKYADYLFPGGFKGVTKYVYPWLTSTDPKEASGDKNYGMPLEDYVPPNANNGDAQPVLPASGVPGGNPGLFEDLYEVSAVITNDGDRVGEEVPQLVRNLSFFPPILS.

Residues Met-1 to Ala-18 form the signal peptide. Residues Asn-62 and Asn-276 are each glycosylated (N-linked (GlcNAc...) asparagine). The active site involves Asp-304. Asn-339, Asn-346, Asn-465, Asn-547, Asn-566, Asn-588, and Asn-811 each carry an N-linked (GlcNAc...) asparagine glycan.

Belongs to the glycosyl hydrolase 3 family.

It is found in the secreted. The catalysed reaction is Hydrolysis of terminal, non-reducing beta-D-glucosyl residues with release of beta-D-glucose.. It participates in glycan metabolism; cellulose degradation. Functionally, beta-glucosidases are one of a number of cellulolytic enzymes involved in the degradation of cellulosic biomass. Catalyzes the last step releasing glucose from the inhibitory cellobiose. The polypeptide is Probable beta-glucosidase ARB_05654 (Arthroderma benhamiae (strain ATCC MYA-4681 / CBS 112371) (Trichophyton mentagrophytes)).